We begin with the raw amino-acid sequence, 299 residues long: Tyrosine recombinase XerC (299 aa).

The 85-residue stretch at 1 to 85 (MERQLDAYCE…AVRGLYHYLN (85 aa)) folds into the Core-binding (CB) domain. A Tyr recombinase domain is found at 106 to 285 (RLPKTLDTDR…DFQHLATVYD (180 aa)). Residues arginine 146, lysine 170, histidine 237, arginine 240, and histidine 263 contribute to the active site. Tyrosine 272 acts as the O-(3'-phospho-DNA)-tyrosine intermediate in catalysis.

Belongs to the 'phage' integrase family. XerC subfamily. In terms of assembly, forms a cyclic heterotetrameric complex composed of two molecules of XerC and two molecules of XerD.

It localises to the cytoplasm. Site-specific tyrosine recombinase, which acts by catalyzing the cutting and rejoining of the recombining DNA molecules. The XerC-XerD complex is essential to convert dimers of the bacterial chromosome into monomers to permit their segregation at cell division. It also contributes to the segregational stability of plasmids. This Pseudomonas fluorescens protein is Tyrosine recombinase XerC.